We begin with the raw amino-acid sequence, 31 residues long: Cytochrome b6-f complex subunit 6 (31 aa).

A helical membrane pass occupies residues 4–26 (ITSYFGFLLAASTITSALLIGLS).

Belongs to the PetL family. As to quaternary structure, the 4 large subunits of the cytochrome b6-f complex are cytochrome b6, subunit IV (17 kDa polypeptide, PetD), cytochrome f and the Rieske protein, while the 4 small subunits are PetG, PetL, PetM and PetN. The complex functions as a dimer.

The protein resides in the plastid. The protein localises to the chloroplast thylakoid membrane. Functionally, component of the cytochrome b6-f complex, which mediates electron transfer between photosystem II (PSII) and photosystem I (PSI), cyclic electron flow around PSI, and state transitions. PetL is important for photoautotrophic growth as well as for electron transfer efficiency and stability of the cytochrome b6-f complex. The polypeptide is Cytochrome b6-f complex subunit 6 (Chloranthus spicatus (Chulantree)).